Reading from the N-terminus, the 574-residue chain is Probable inactive serine/threonine-protein kinase slob2 (574 aa).

A helical membrane pass occupies residues 6-26 (YIIIAAVGGFAILTFIIIVVL). Residues 166–346 (YADRGSLRDF…PLHRLTYTSR (181 aa)) enclose the Protein kinase domain. Asparagine 358 is a glycosylation site (N-linked (GlcNAc...) asparagine). Residues 366–386 (SKPNSKDLSQPKLKDLKKQKK) are disordered. Asparagine 440, asparagine 449, asparagine 453, asparagine 456, asparagine 464, asparagine 470, asparagine 477, and asparagine 483 each carry an N-linked (GlcNAc...) asparagine glycan. Positions 450 to 493 (TTTNTTNTSTSSSLNSSFNSNVSTSYSNATTTTNTTSASSVSPP) are enriched in low complexity. The segment at 450 to 574 (TTTNTTNTST…DKSGPLLKKS (125 aa)) is disordered. Pro residues predominate over residues 494-539 (ISSPPPPPPPPPPSKSSGPPPPPPPPPKSSGPPPPPPPKSSPPPPA). Low complexity predominate over residues 546–556 (LLSSIESFSSS).

Belongs to the protein kinase superfamily. Ser/Thr protein kinase family.

The protein resides in the membrane. The protein is Probable inactive serine/threonine-protein kinase slob2 (slob2) of Dictyostelium discoideum (Social amoeba).